The chain runs to 883 residues: DNA mismatch repair protein MutS (883 aa).

Residue Gly602–Ser609 coordinates ATP.

It belongs to the DNA mismatch repair MutS family.

In terms of biological role, this protein is involved in the repair of mismatches in DNA. It is possible that it carries out the mismatch recognition step. This protein has a weak ATPase activity. The chain is DNA mismatch repair protein MutS from Staphylococcus haemolyticus (strain JCSC1435).